A 341-amino-acid polypeptide reads, in one-letter code: Eukaryotic translation initiation factor 3 subunit I (341 aa).

WD repeat units follow at residues 8–47 (GHER…RLGT), 56–95 (GHNG…CLYT), 151–190 (LSGS…EVQA), 194–233 (EHSA…VMKV), 235–274 (TTET…GKFE), and 291–331 (GHFG…RSRP).

Belongs to the eIF-3 subunit I family. In terms of assembly, component of the eukaryotic translation initiation factor 3 (eIF-3) complex.

Its subcellular location is the cytoplasm. Component of the eukaryotic translation initiation factor 3 (eIF-3) complex, which is involved in protein synthesis of a specialized repertoire of mRNAs and, together with other initiation factors, stimulates binding of mRNA and methionyl-tRNAi to the 40S ribosome. The eIF-3 complex specifically targets and initiates translation of a subset of mRNAs involved in cell proliferation. The protein is Eukaryotic translation initiation factor 3 subunit I of Cryptococcus neoformans var. neoformans serotype D (strain B-3501A) (Filobasidiella neoformans).